We begin with the raw amino-acid sequence, 217 residues long: Vesicle transport through interaction with t-SNAREs homolog 1A (217 aa).

The Cytoplasmic segment spans residues Met-1–Arg-192. Coiled coils occupy residues Pro-31–Arg-92 and Glu-112–Ser-178. A helical membrane pass occupies residues Ile-193–Ser-213. Residues Val-214 to His-217 lie on the Extracellular side of the membrane.

This sequence belongs to the VTI1 family. In terms of assembly, interacts with distinct SNARE complexes that contain either STX5 or STX6. Interacts with NAPA and, to a lesser extent, with NAPG. Identified in a complex containing STX6, STX12, VAMP4 and VTI1A.

It is found in the cytoplasmic vesicle. Its subcellular location is the golgi apparatus membrane. Functionally, V-SNARE that mediates vesicle transport pathways through interactions with t-SNAREs on the target membrane. These interactions are proposed to mediate aspects of the specificity of vesicle trafficking and to promote fusion of the lipid bilayers. Involved in vesicular transport from the late endosomes to the trans-Golgi network. Along with VAMP7, involved in an non-conventional RAB1-dependent traffic route to the cell surface used by KCNIP1 and KCND2. May be involved in increased cytokine secretion associated with cellular senescence. The chain is Vesicle transport through interaction with t-SNAREs homolog 1A (VTI1A) from Homo sapiens (Human).